We begin with the raw amino-acid sequence, 158 residues long: Transmembrane protein 50B (158 aa).

At Ala2 the chain carries N-acetylalanine. 4 helical membrane-spanning segments follow: residues Val28 to Tyr48, His56 to Ser76, Trp98 to Phe118, and Val128 to Tyr148.

This sequence belongs to the UPF0220 family. May form homotrimers or homodimers.

Its subcellular location is the endoplasmic reticulum membrane. The protein localises to the golgi apparatus membrane. This chain is Transmembrane protein 50B (TMEM50B), found in Bos taurus (Bovine).